An 846-amino-acid chain; its full sequence is Integrin beta-PS (846 aa).

A signal peptide spans 1-28 (MILERNRRCQLALLMIAILAAIAGQTDA). At 29–777 (QKAAKLTAVS…NKECPAKVFM (749 aa)) the chain is on the extracellular side. Cysteines 46 and 55 form a disulfide. N-linked (GlcNAc...) asparagine glycosylation occurs at asparagine 72. The 234-residue stretch at 186–419 (DLYYLMDLSK…ELVKEEYRKI (234 aa)) folds into the VWFA domain. Cysteine 249 and cysteine 252 form a disulfide bridge. Residues asparagine 266 and asparagine 277 are each glycosylated (N-linked (GlcNAc...) asparagine). A disulfide bridge connects residues cysteine 300 and cysteine 341. N-linked (GlcNAc...) asparagine glycosylation is found at asparagine 403 and asparagine 428. Intrachain disulfides connect cysteine 441-cysteine 453, cysteine 473-cysteine 741, cysteine 507-cysteine 530, cysteine 522-cysteine 533, cysteine 535-cysteine 544, cysteine 546-cysteine 579, cysteine 561-cysteine 577, cysteine 571-cysteine 582, cysteine 584-cysteine 599, cysteine 601-cysteine 624, cysteine 606-cysteine 622, cysteine 614-cysteine 627, cysteine 629-cysteine 638, cysteine 640-cysteine 664, cysteine 647-cysteine 662, cysteine 656-cysteine 667, cysteine 669-cysteine 682, cysteine 685-cysteine 688, cysteine 692-cysteine 701, cysteine 698-cysteine 771, and cysteine 719-cysteine 749. I-EGF domains follow at residues 507-545 (CENP…NKCE), 546-600 (CSAT…KHCE), 601-639 (CDNF…SNCG), and 640-683 (CQES…RHCE). An N-linked (GlcNAc...) asparagine glycan is attached at asparagine 557. An N-linked (GlcNAc...) asparagine glycan is attached at asparagine 603. Asparagine 644 carries N-linked (GlcNAc...) asparagine glycosylation. Asparagine 718 carries an N-linked (GlcNAc...) asparagine glycan. A helical membrane pass occupies residues 778 to 798 (LGIVMGVIAAIVLVGLAILLL). The Cytoplasmic segment spans residues 799–846 (WKLLTTIHDRREFARFEKERMNAKWDTGENPIYKQATSTFKNPMYAGK). Phosphotyrosine is present on residues tyrosine 831 and tyrosine 843.

It belongs to the integrin beta chain family. As to quaternary structure, heterodimer of an alpha and a beta subunit. Beta-PS associates with either alpha-PS1, alpha-PS2, alpha-PS3, alpha-PS4 or alpha-PS5. In ovaries, strongly expressed in follicle cells. In oocytes, expressed in the forming dorsal appendages (at protein level). Expressed in the embryonic dorsal cuticle, the larval eye and the wing imaginal disk. In testes, detected at the interface between somatic hub cells and cyst stem cells.

Its subcellular location is the cell membrane. It is found in the apical cell membrane. It localises to the lateral cell membrane. The protein localises to the basal cell membrane. Its function is as follows. Integrin alpha-PS1/beta-PS is a receptor for laminin. Integrin alpha-PS2/beta-PS is a receptor for Tig, wb and Ten-m. Contributes to endodermal integrity and adhesion between the midgut epithelium and the surrounding visceral muscle. Essential for migration of the primordial midgut cells and for maintaining, but not establishing, cell polarity in the midgut epithelium. The two beta subunits mediate midgut migration by distinct mechanisms: beta-PS requires rhea/talin and Itgbn does not. Required for rhea/talin correct cellular localization in the midgut. Required for many embryonic (dorsal closure and somatic muscle attachments) and postembryonic developmental processes (attachment between cell layers of imaginal disks, organization of ommatidial arrays and flight muscle development). Involved in the function and/or development of the olfactory system. In the testes, essential for shv-dependent maintenance of somatic hub cells and their localization to the apical tip. Plays a role in timely border cell migration during oogenesis. This Drosophila melanogaster (Fruit fly) protein is Integrin beta-PS (mys).